The chain runs to 96 residues: Evasin P1078 (96 aa).

Residues 1-28 (MAFNTITFLQWAVFVAILFNMNLHSASA) form the signal peptide. 3 cysteine pairs are disulfide-bonded: cysteine 48-cysteine 67, cysteine 52-cysteine 69, and cysteine 63-cysteine 80. Asparagine 51 is a glycosylation site (N-linked (GlcNAc...) asparagine). Asparagine 74 carries N-linked (GlcNAc...) asparagine glycosylation.

The protein localises to the secreted. Salivary chemokine-binding protein which binds to host chemokines CXCL1, CXCL2, CXCL3, CXCL5, CXCL6, CXCL11 and CXCL13. The sequence is that of Evasin P1078 from Ixodes ricinus (Common tick).